Consider the following 233-residue polypeptide: MASLQANATSSLQYQTAPLESSHIPGSPHSVHVLLEGYSKDVGGDLFQADGSVTLIQGPLTVLVDTAGPWSRDSLLQSLQNQGVAPADVTHVICTHGHSDHVGNLNLFSHAEILVSYDLWRNGYYVAHDFRAGVPYVLPGGEGLEVVATPGHTGSDISLLVPGTSLGTVVVAGDLFEREGDGDSWQPLSEDPERQEDSRAAILKVADVIIPGHGPPFRVIKHGQLAQQETKNN.

Zn(2+)-binding residues include histidine 96, histidine 98, aspartate 100, histidine 101, histidine 152, aspartate 174, and histidine 213.

This sequence belongs to the metallo-beta-lactamase superfamily. Glyoxalase II family. As to quaternary structure, homodimer. It depends on Zn(2+) as a cofactor.

The protein resides in the cytoplasm. It is found in the cytosol. The protein localises to the nucleus. It catalyses the reaction a ribonucleotidyl-ribonucleotide-RNA + H2O = a 3'-end ribonucleotide-RNA + a 5'-end 5'-phospho-ribonucleoside-RNA + H(+). Endoribonuclease that catalyzes the hydrolysis of histone-coding pre-mRNA 3'-end. Involved in histone pre-mRNA processing during the S-phase of the cell cycle, which is required for entering/progressing through S-phase. Cleaves histone pre-mRNA at a major and a minor cleavage site after the 5'-ACCCA-3' and the 5'-ACCCACA-3' sequence, respectively, and located downstream of the stem-loop. May require the presence of the HDE element located at the histone pre-RNA 3'-end to avoid non-specific cleavage. The chain is Metallo-beta-lactamase domain-containing protein 1 (mblac1) from Xenopus laevis (African clawed frog).